The following is a 530-amino-acid chain: Developmental and secondary metabolism regulator VEL1 (530 aa).

The 195-residue stretch at 26 to 220 folds into the Velvet domain; that stretch reads NRSLWYQMTV…ADQGCQVRIR (195 aa). A Nuclear localization signal motif is present at residues 40–45; sequence ERARAC. The interval 206-516 is disordered; the sequence is LSKTVADQGC…HDQGWYSRAD (311 aa). A compositionally biased stretch (basic and acidic residues) spans 244–253; the sequence is FERREEDFGR. Pro residues predominate over residues 295–305; the sequence is YPPPPPPPSYE. Residues 347 to 356 are compositionally biased toward polar residues; sequence YAPTAQSPYS. Positions 380–389 are enriched in basic and acidic residues; the sequence is VKHDLYDRRQ. Low complexity predominate over residues 390–404; sequence STSSYVPPSPSVYST. Residues 415 to 426 are compositionally biased toward pro residues; that stretch reads SYPPTPVAAPRP. Residues 429 to 460 are PEST; it reads MHSQTSLPALKIDQLVSPVSPLPPIEPQTGPA. Residues 478–490 are compositionally biased toward polar residues; it reads FAQSTRPLHNGQR.

It belongs to the velvet family. VeA subfamily. In terms of assembly, component of the heterotrimeric velvet complex composed of LAE1, VEL1 and VEL2; VEL1 acting as a bridging protein between LAE1 and VEL2. Interacts with LAE1.

The protein resides in the nucleus. The protein localises to the cytoplasm. Component of the velvet transcription factor complex that controls sexual/asexual developmental ratio in response to light, promoting sexual development in the darkness while stimulating asexual sporulation under illumination. The velvet complex hat acts as a global regulator for secondary metabolite gene expression. Controls positively the expression of the gibberellins, fumonisins and fusarin C gene clusters. Controls the expression of the fusaric acid gene cluster. Controls negatively the expression of the bikaverin gene cluster. Regulates the expression of laeA. Plays a crucial role in virulence. The chain is Developmental and secondary metabolism regulator VEL1 from Gibberella fujikuroi (strain CBS 195.34 / IMI 58289 / NRRL A-6831) (Bakanae and foot rot disease fungus).